The following is a 126-amino-acid chain: UPF0292 protein TSIB_0423 (126 aa).

The region spanning 20–100 (NGVILVEGMR…RVDTNTRREL (81 aa)) is the Toprim domain. Mg(2+)-binding residues include E26, D69, and D71.

This sequence belongs to the UPF0292 family. Mg(2+) serves as cofactor.

This chain is UPF0292 protein TSIB_0423, found in Thermococcus sibiricus (strain DSM 12597 / MM 739).